The sequence spans 74 residues: ATP synthase subunit 9, mitochondrial (74 aa).

Transmembrane regions (helical) follow at residues 8 to 28 and 50 to 70; these read MGAG…GNVF and ILGF…AFLI.

This sequence belongs to the ATPase C chain family. In terms of assembly, F-type ATPases have 2 components, CF(1) - the catalytic core - and CF(0) - the membrane proton channel. CF(1) has five subunits: alpha(3), beta(3), gamma(1), delta(1), epsilon(1). CF(0) has three main subunits: a, b and c.

It is found in the mitochondrion membrane. Its function is as follows. This protein is one of the chains of the nonenzymatic membrane component (F0) of mitochondrial ATPase. The protein is ATP synthase subunit 9, mitochondrial (ATP9) of Solanum lycopersicum (Tomato).